Here is a 346-residue protein sequence, read N- to C-terminus: Putative [LysW]-L-2-aminoadipate/[LysW]-L-glutamate phosphate reductase (346 aa).

Ser-12–Thr-15 serves as a coordination point for NADP(+). Residue Cys-147 is part of the active site. The interval Gly-178–Val-198 is disordered. Asn-310 provides a ligand contact to NADP(+).

This sequence belongs to the NAGSA dehydrogenase family. Type 1 subfamily. LysY sub-subfamily.

Its subcellular location is the cytoplasm. It catalyses the reaction [amino-group carrier protein]-C-terminal-N-(1-carboxy-5-oxopentan-1-yl)-L-glutamine + phosphate + NADP(+) = [amino-group carrier protein]-C-terminal-N-(1-carboxy-5-phosphooxy-5-oxopentan-1-yl)-L-glutamine + NADPH + H(+). It carries out the reaction [amino-group carrier protein]-C-terminal-gamma-(L-glutamyl-5-semialdehyde)-L-glutamate + phosphate + NADP(+) = [amino-group carrier protein]-C-terminal-gamma-(5-phospho-L-glutamyl)-L-glutamate + NADPH + H(+). Its pathway is amino-acid biosynthesis; L-lysine biosynthesis via AAA pathway; L-lysine from L-alpha-aminoadipate (Thermus route): step 3/5. The protein operates within amino-acid biosynthesis; L-arginine biosynthesis. Its function is as follows. Involved in both the arginine and lysine biosynthetic pathways. This is Putative [LysW]-L-2-aminoadipate/[LysW]-L-glutamate phosphate reductase from Haloquadratum walsbyi (strain DSM 16790 / HBSQ001).